The chain runs to 274 residues: 4-hydroxy-3-methylbut-2-enyl diphosphate reductase (274 aa).

Cys-12 is a [4Fe-4S] cluster binding site. 2 residues coordinate (2E)-4-hydroxy-3-methylbut-2-enyl diphosphate: His-36 and His-70. His-36 and His-70 together coordinate dimethylallyl diphosphate. Residues His-36 and His-70 each contribute to the isopentenyl diphosphate site. Cys-92 is a [4Fe-4S] cluster binding site. Position 120 (His-120) interacts with (2E)-4-hydroxy-3-methylbut-2-enyl diphosphate. His-120 is a binding site for dimethylallyl diphosphate. His-120 contacts isopentenyl diphosphate. The active-site Proton donor is Glu-122. Residue Thr-158 participates in (2E)-4-hydroxy-3-methylbut-2-enyl diphosphate binding. Position 186 (Cys-186) interacts with [4Fe-4S] cluster. (2E)-4-hydroxy-3-methylbut-2-enyl diphosphate contacts are provided by Ser-214, Ser-215, Asn-216, and Ser-258. 4 residues coordinate dimethylallyl diphosphate: Ser-214, Ser-215, Asn-216, and Ser-258. Isopentenyl diphosphate contacts are provided by Ser-214, Ser-215, Asn-216, and Ser-258.

The protein belongs to the IspH family. It depends on [4Fe-4S] cluster as a cofactor.

It carries out the reaction isopentenyl diphosphate + 2 oxidized [2Fe-2S]-[ferredoxin] + H2O = (2E)-4-hydroxy-3-methylbut-2-enyl diphosphate + 2 reduced [2Fe-2S]-[ferredoxin] + 2 H(+). The catalysed reaction is dimethylallyl diphosphate + 2 oxidized [2Fe-2S]-[ferredoxin] + H2O = (2E)-4-hydroxy-3-methylbut-2-enyl diphosphate + 2 reduced [2Fe-2S]-[ferredoxin] + 2 H(+). It participates in isoprenoid biosynthesis; dimethylallyl diphosphate biosynthesis; dimethylallyl diphosphate from (2E)-4-hydroxy-3-methylbutenyl diphosphate: step 1/1. The protein operates within isoprenoid biosynthesis; isopentenyl diphosphate biosynthesis via DXP pathway; isopentenyl diphosphate from 1-deoxy-D-xylulose 5-phosphate: step 6/6. In terms of biological role, catalyzes the conversion of 1-hydroxy-2-methyl-2-(E)-butenyl 4-diphosphate (HMBPP) into a mixture of isopentenyl diphosphate (IPP) and dimethylallyl diphosphate (DMAPP). Acts in the terminal step of the DOXP/MEP pathway for isoprenoid precursor biosynthesis. The sequence is that of 4-hydroxy-3-methylbut-2-enyl diphosphate reductase from Helicobacter pylori (strain P12).